The following is a 275-amino-acid chain: Protein FAM210A (275 aa).

The disordered stretch occupies residues 51–100 (KWLHSQPKQQDTATKTPVHDLPSGIQHQSEETSPSARSSISTDPSSIAEE). 2 stretches are compositionally biased toward polar residues: residues 56 to 65 (QPKQQDTATK) and 75 to 95 (IQHQ…TDPS). Residues 105-217 (DQSIGLLKRF…GYLSTPPLVK (113 aa)) enclose the DUF1279 domain. Residues 124–144 (VLIPVHLVTSSIWFGSFYYAA) form a helical membrane-spanning segment. Residues 221-275 (QDRMEETKELFTEKMEETRDIISGKMEETKDRISEKLQETKDRVAFRKKKNEDME) are a coiled coil.

The protein belongs to the FAM210 family.

Its subcellular location is the membrane. The protein localises to the mitochondrion. The protein resides in the cytoplasm. Its function is as follows. May play a role in the structure and strength of both muscle and bone. This chain is Protein FAM210A (fam210a), found in Xenopus laevis (African clawed frog).